Reading from the N-terminus, the 113-residue chain is UPF0102 protein Mfla_2283 (113 aa).

It belongs to the UPF0102 family.

This is UPF0102 protein Mfla_2283 from Methylobacillus flagellatus (strain ATCC 51484 / DSM 6875 / VKM B-1610 / KT).